The sequence spans 378 residues: uncharacterized protein (378 aa).

Belongs to the IIV-6 329R family.

This is an uncharacterized protein from Acheta domesticus (House cricket).